The following is a 453-amino-acid chain: tRNA modification GTPase MnmE (453 aa).

Arg-22, Glu-79, and Lys-119 together coordinate (6S)-5-formyl-5,6,7,8-tetrahydrofolate. One can recognise a TrmE-type G domain in the interval 215-376; that stretch reads GMKVVIAGRP…LRQHLKECMG (162 aa). Asn-225 lines the K(+) pocket. Residues 225 to 230, 244 to 250, 269 to 272, and 334 to 337 each bind GTP; these read NAGKSS, TDIAGTT, DTAG, and NKAD. Mg(2+) is bound at residue Ser-229. 3 residues coordinate K(+): Thr-244, Ile-246, and Thr-249. Thr-250 contacts Mg(2+). Lys-453 contributes to the (6S)-5-formyl-5,6,7,8-tetrahydrofolate binding site.

The protein belongs to the TRAFAC class TrmE-Era-EngA-EngB-Septin-like GTPase superfamily. TrmE GTPase family. Homodimer. Heterotetramer of two MnmE and two MnmG subunits. K(+) is required as a cofactor.

The protein resides in the cytoplasm. Functionally, exhibits a very high intrinsic GTPase hydrolysis rate. Involved in the addition of a carboxymethylaminomethyl (cmnm) group at the wobble position (U34) of certain tRNAs, forming tRNA-cmnm(5)s(2)U34. The polypeptide is tRNA modification GTPase MnmE (Vibrio cholerae serotype O1 (strain ATCC 39541 / Classical Ogawa 395 / O395)).